Consider the following 309-residue polypeptide: THO complex subunit Tho3 (309 aa).

6 WD repeats span residues 22 to 61 (GQQG…FKFT), 65 to 107 (GNRG…PIAE), 109 to 148 (ESNY…IMET), 192 to 231 (AHNS…CERS), 234 to 273 (RMDY…QIWK), and 275 to 309 (PTNG…IFGL).

This sequence belongs to the THOC3 family. As to quaternary structure, component of the transcription/export (TREX) complex, which is at least is formed of SUB2, TEX1 and YRA1 and the THO complex composed of HPR1, MFT1, THO2 and THP1.

It localises to the nucleus. In terms of biological role, component of the TREX complex, which operates in coupling transcription elongation to mRNA export. The chain is THO complex subunit Tho3 (THO3) from Schizosaccharomyces pombe (strain 972 / ATCC 24843) (Fission yeast).